The chain runs to 174 residues: MERAREIGEGSASSLREQRNLREKERRMRMKHLFSILSSHVSPTRRLPVPQLIDQAVSYMIQLKEKVNYLNEMKRRMLGGEVKNRSEGSSLLPKLSIRSLDSIIEMNLVMDLNMKGVMLHKLVSVFEEEGAQVMSANLQNLNDRTFYTIIAQAIICRIGIDPSRIEERLRDIIS.

The bHLH domain maps to 14-63; sequence SLREQRNLREKERRMRMKHLFSILSSHVSPTRRLPVPQLIDQAVSYMIQL.

The protein belongs to the bHLH protein family.

It is found in the nucleus. The sequence is that of Transcription factor bHLH168 from Arabidopsis thaliana (Mouse-ear cress).